We begin with the raw amino-acid sequence, 309 residues long: D-alanine--D-alanine ligase (309 aa).

Residues 104-306 (KLLWQSFNLP…YQILVQKILE (203 aa)) form the ATP-grasp domain. 137–192 (ISLLGLPIIVKPNQEGSSIGITIVYSYETLYKACKTAFIFDNSILIEKFIYGEEYT) is an ATP binding site. Mg(2+) contacts are provided by D260, E273, and N275.

The protein belongs to the D-alanine--D-alanine ligase family. Mg(2+) is required as a cofactor. It depends on Mn(2+) as a cofactor.

The protein resides in the cytoplasm. It catalyses the reaction 2 D-alanine + ATP = D-alanyl-D-alanine + ADP + phosphate + H(+). It participates in cell wall biogenesis; peptidoglycan biosynthesis. In terms of biological role, cell wall formation. This chain is D-alanine--D-alanine ligase, found in Buchnera aphidicola subsp. Baizongia pistaciae (strain Bp).